The chain runs to 452 residues: Coiled-coil domain-containing protein 71 (452 aa).

A disordered region spans residues 81-106 (PSQTKLQARAPTPAATSPPASAPQTA). A compositionally biased stretch (low complexity) spans 87–106 (QARAPTPAATSPPASAPQTA). At Ser129 the chain carries Phosphoserine. 2 disordered regions span residues 209-256 (PLKV…GLQS) and 322-404 (AREV…LGPG). The stretch at 279–344 (KAAQAKAACA…QAKAKVARTQ (66 aa)) forms a coiled coil. A compositionally biased stretch (low complexity) spans 332–344 (KAVQAKAKVARTQ). The span at 377 to 386 (RTEEAKDLSP) shows a compositional bias: basic and acidic residues.

In Bos taurus (Bovine), this protein is Coiled-coil domain-containing protein 71 (CCDC71).